A 1277-amino-acid polypeptide reads, in one-letter code: Protein FAM83H (1277 aa).

The segment covering 1–12 has biased composition (polar residues); that stretch reads MARRSQSSSQGE. 8 disordered regions span residues 1–20, 67–98, 717–756, 772–805, 971–1018, 1070–1130, 1158–1225, and 1247–1266; these read MARR…PNYL, SLQR…SGTY, FGST…TNPL, SKLE…TGRT, EQTS…NSAF, KAEE…SRLS, QKNR…RDIL, and KKDE…AGKI. The span at 724-750 shows a compositional bias: basic and acidic residues; that stretch reads SVEKAKENPPAEKEKEEGLLSRHDSFR. Polar residues-rich tracts occupy residues 777-805, 971-982, 993-1015, and 1112-1130; these read HTST…TGRT, EQTSSTIQTIGN, SGPT…TRPN, and KSLS…SRLS. Over residues 1204–1215 the composition is skewed to low complexity; that stretch reads SFLSRSRFSRPS. The span at 1247–1263 shows a compositional bias: basic and acidic residues; that stretch reads KKDEQPSHADDNDDKKA.

Belongs to the FAM83 family.

The protein resides in the cytoplasm. The protein localises to the cytoskeleton. Functionally, may play a role in keratin cytoskeleton disassembly. This Xenopus tropicalis (Western clawed frog) protein is Protein FAM83H.